The following is a 431-amino-acid chain: MDSIEIVGGKKLKGIIPISGAKNAALPLMIAALLTEETLSLDNIPHLADIELLIRILNNHGVGYAVDGQKNHTECVHSRTIHFTAQKITTTYAPYDLVRKMRASFWVIGPLLARCREAYVSLPGGCAIGTRPVDFILEGLKTLGARITIENGYVHAKVPKGLKGAHYRFPKVTVGGTHVMIMAAVTANGKTVLENAACEPEVTNLVQALNAMGAKITGEGTTILTIEGVQKLNGARISVIPDRIEAGTYAMAVAMTGGDVMLKNANPHHLTQVLEILQKTGLDIEIKPQGIHLKRNLRQTKIMPVDIKTGPYPAFPTDLQAQFMALMTRAQGISHITETIFENRFMHVQELNRLGAQIKLDGQTATVFGTEHLQGAPVMATDLRASVSLVIAALAAKGKTTVNRVYHLDRGFERLEEKLARCGATIQRITV.

22–23 (KN) serves as a coordination point for phosphoenolpyruvate. Residue Arg-102 coordinates UDP-N-acetyl-alpha-D-glucosamine. Cys-126 acts as the Proton donor in catalysis. A 2-(S-cysteinyl)pyruvic acid O-phosphothioketal modification is found at Cys-126. 2 residues coordinate UDP-N-acetyl-alpha-D-glucosamine: Asp-318 and Ile-340.

This sequence belongs to the EPSP synthase family. MurA subfamily.

It is found in the cytoplasm. The enzyme catalyses phosphoenolpyruvate + UDP-N-acetyl-alpha-D-glucosamine = UDP-N-acetyl-3-O-(1-carboxyvinyl)-alpha-D-glucosamine + phosphate. It participates in cell wall biogenesis; peptidoglycan biosynthesis. Functionally, cell wall formation. Adds enolpyruvyl to UDP-N-acetylglucosamine. The protein is UDP-N-acetylglucosamine 1-carboxyvinyltransferase of Bartonella henselae (strain ATCC 49882 / DSM 28221 / CCUG 30454 / Houston 1) (Rochalimaea henselae).